The chain runs to 468 residues: 3-isopropylmalate dehydratase large subunit (468 aa).

Cysteine 349, cysteine 409, and cysteine 412 together coordinate [4Fe-4S] cluster.

The protein belongs to the aconitase/IPM isomerase family. LeuC type 1 subfamily. In terms of assembly, heterodimer of LeuC and LeuD. It depends on [4Fe-4S] cluster as a cofactor.

The enzyme catalyses (2R,3S)-3-isopropylmalate = (2S)-2-isopropylmalate. It participates in amino-acid biosynthesis; L-leucine biosynthesis; L-leucine from 3-methyl-2-oxobutanoate: step 2/4. Its function is as follows. Catalyzes the isomerization between 2-isopropylmalate and 3-isopropylmalate, via the formation of 2-isopropylmaleate. In Ruegeria pomeroyi (strain ATCC 700808 / DSM 15171 / DSS-3) (Silicibacter pomeroyi), this protein is 3-isopropylmalate dehydratase large subunit.